The primary structure comprises 1012 residues: Centriole and centriolar satellite protein OFD1 (1012 aa).

One can recognise a LisH domain in the interval 70-102; it reads LIGASNSLVADHLQRCGYEYSLSVFFPESGLAK. 2 coiled-coil regions span residues 189–557 and 622–662; these read QRIK…ENEV and DSDL…NSAK. The segment at 609 to 665 is mediates homooligomerization; sequence TNYPTAWVEGSSPDSDLEFVANTKARVKELQQEAERLEKAFRSYHRRVIKNSAKSPL. The mediates the interaction with SDCCAG8 stretch occupies residues 615–1012; sequence WVEGSSPDSD…FSHEELDDSW (398 aa). Residues serine 663, serine 669, serine 686, and serine 720 each carry the phosphoserine modification. The tract at residues 719–744 is disordered; it reads GSAASRLRGGTSSRRLSSTPLPKAKR. A compositionally biased stretch (low complexity) spans 720-737; sequence SAASRLRGGTSSRRLSST. Position 735 is a phosphoserine; by PKA (serine 735). 4 positions are modified to phosphoserine: serine 745, serine 774, serine 789, and serine 811. The disordered stretch occupies residues 757 to 794; the sequence is RSHIASPSPCPDRMPLPSPTESRHSLSIPPVSSPPEQK. Pro residues predominate over residues 764 to 774; that stretch reads SPCPDRMPLPS. 2 disordered regions span residues 824 to 904 and 963 to 1012; these read FESS…LQEV and KIIQ…DDSW. The stretch at 867–956 forms a coiled coil; it reads SVDQKQIEEQ…IKDKSAHSEN (90 aa). 2 stretches are compositionally biased toward basic and acidic residues: residues 871-904 and 973-982; these read KQIE…LQEV and SADKSSKKMV.

It belongs to the OFD1 family. Homooligomer. Interacts with LCA5. Interacts with RUVBL1; the interaction is direct and may mediate interaction with the NuA4 histone acetyltransferase complex. Interacts with SDCCAG8; the interaction is direct. Interacts with MAP1LC3B. Interacts with C2CD3; OFD1 may act as a negative regulator of C2CD3. Forms a complex with KIAA0753/OFIP and CEP20/FOR20; the interaction with CEP20 is detected only in the presence of KIAA0753. Interacts with PCM1; this interaction may be mediated by KIAA0753/OFIP. Interacts with TBC1D31; regulates OFD1 activity in cilium assembly. In terms of processing, phosphorylated. Phosphorylation at Ser-735, by the cAMP-dependent protein kinase PKA, triggers ubiquitination and proteasomal degradation of OFD1. Also increases its interaction with TBC1D31 and regulates its function in ciliogenesis. Post-translationally, ubiquitinated by PJA2, upon phosphorylation at Ser-735 by PKA, leads to the proteasomal degradation of OFD1. Widely expressed. Expressed in 9 and 14 weeks old embryos in metanephric mesenchyme, oral mucosa, lung, heart, nasal and cranial cartilage, and brain. Expressed in metanephros, brain, tongue, and limb.

The protein resides in the cytoplasm. It localises to the cytoskeleton. Its subcellular location is the microtubule organizing center. It is found in the centrosome. The protein localises to the centriole. The protein resides in the cilium basal body. It localises to the nucleus. Its subcellular location is the centriolar satellite. Its function is as follows. Component of the centrioles controlling mother and daughter centrioles length. Recruits to the centriole IFT88 and centriole distal appendage-specific proteins including CEP164. Involved in the biogenesis of the cilium, a centriole-associated function. The cilium is a cell surface projection found in many vertebrate cells required to transduce signals important for development and tissue homeostasis. Plays an important role in development by regulating Wnt signaling and the specification of the left-right axis. Only OFD1 localized at the centriolar satellites is removed by autophagy, which is an important step in the ciliogenesis regulation. The chain is Centriole and centriolar satellite protein OFD1 (OFD1) from Homo sapiens (Human).